The chain runs to 1560 residues: MEEIENAHYQNLENFNDETSEDVNDTSDDINKNNDDNNKYDDNNVNVLDDKNKLENEEDNNNNDNMMIFSSILRYQRYKTKKGNIYFDFKNTNLSLNEKDMLVQSSNFYHLFDIKSLLCPHIYLNVSSHININISDYKNYLKRILNNDNVLDDKNENVKYSSCQEFIFEAVEQAEHIEVFTKVQIVKKLFLFLNQNVAEKMKNYIDNIPIINSNDYVLVQTNLKNDLLLGYVKGIKYNLFFEILNMKKCFHSFLNENIVIYEINEDKEGYFKTIDGKKYLKEQIVYEKKDLLKNLDFYSMYYCDYYFSSNSIIELEKKNNNNINCVNNNINSVNNNINSVDNNINNVDNNINSVNNNNNISDKITHKFEYNDYNDIHLFFSFNICIKSVKNNLFLHIIYNDNNLKNGDEYLNETFPHYEELNLYNKQFDINKMDKNLFKSNTFFINNLYYHLKCKLLCVFKFINMSDDDFMTDIHISQIKKRRYVNEQDSYMLYTFNIHTLSNEGMVYIFFCNLYISNMFKENNFEIRVHTYLHFQLNKQNSYKKLKLIKYSSKFLYSLCFKEKSDSKKKKKKNDHHERDSDNNNNDSNNNNYYNSNNNSNYCGSNNIIYGHDENFIFNSCDFNTLDQIKSGNYLIKDETINENFIFEVRNYKYTFILISSKCNIIIITLRKKKRKEEYNKKMSKYSSCSLNENVYMEGVEILNYCSSNNKNTNNIICNTIINKYNYEINNNIKNKNKSYILFEIVCFYENGEIQKYIYTCSLKNGNFEFFLNVKEDEKTKSINCKKCFFKPILFPFNEELLNKTKSSNDLVLYNIKLSHFKNLIYIYFQEKKIEGISLTINNECLIINYIKMVSKLLKKILQNLYNSDDIDIVYNFQHNTKNKCNYLSQNVNIPSDNTISNVIKKNEMDNNDIKYNLFTQREVKSSFFEFKYILFGFYDLFLMNQKNYTDLNEKKKEEYKKKNFINCFDSHSHYNFLNIIKEYINYDYIIDKCSYNISNDTQKKKKIKLNFYYFLLIIQYFKNTYTQEKKRSFFYMVYNELLQRDKYLKHFYYTYHEIDRKTNMHLNHNDNNIDTKEAKKNEETELILKNVNFYDNYELINIRKYDVILFCFLFHMYNFCLKQNGLSNDEFNSHITYFLINKKMKKYKKKYRYISKKKIDTNEKNDDNNNINVCDSKNYKGTKNFDDTTNNILNKQNESLDNLKKNMYLSKNNYDNQLSSYKNTKQNKTNINEKYNNNNIIMNYLTWKKCLYYIYKIKKYTRKIETHEGLYISSMLYINIYLCQIFFILLNILRINNTNIYTNIHFDIRKNNLDYFYLLILLNFYSLFYILISDQKYILHEEENDTYISKNIDNKEQMANDKNIISLLSFFNNIYEQNKEGMLKNDQNKNNHNTKTDILYMSSSGMNISINTPFLEKYLILIYNIIKDKINIVKEDNYIMEKLFFKINCMICNKVCVTNIYNNYYICENNHIFNKCMLTFGCIYKNHIILPTIYLLHDINDKLFPINNDHILSYNLQYELDYIYFCSFCYNFITTQNSFYKKFFLFNQCPFCNHELNIL.

The disordered stretch occupies residues 1–46; the sequence is MEEIENAHYQNLENFNDETSEDVNDTSDDINKNNDDNNKYDDNNVN. Over residues 15-28 the composition is skewed to acidic residues; that stretch reads FNDETSEDVNDTSD. Over residues 29-46 the composition is skewed to basic and acidic residues; that stretch reads DINKNNDDNNKYDDNNVN. Coiled-coil stretches lie at residues 36–60 and 317–359; these read DNNK…EEDN and KKNN…NNNN. A disordered region spans residues 568 to 594; sequence KKKKKKNDHHERDSDNNNNDSNNNNYY. Positions 583 to 594 are enriched in low complexity; it reads NNNNDSNNNNYY. Positions 1188–1239 form a coiled coil; it reads DTTNNILNKQNESLDNLKKNMYLSKNNYDNQLSSYKNTKQNKTNINEKYNNN. A run of 2 helical transmembrane segments spans residues 1271-1291 and 1314-1334; these read LYIS…FILL and LDYF…ILIS.

The protein localises to the membrane. This is an uncharacterized protein from Plasmodium falciparum (isolate 3D7).